The sequence spans 91 residues: Small ribosomal subunit protein uS19 (91 aa).

Belongs to the universal ribosomal protein uS19 family.

Protein S19 forms a complex with S13 that binds strongly to the 16S ribosomal RNA. This is Small ribosomal subunit protein uS19 from Colwellia psychrerythraea (strain 34H / ATCC BAA-681) (Vibrio psychroerythus).